The chain runs to 82 residues: MSGTTGERPFSDIVTSIRYWVIHSITIPALFIAGWLFVSTGLAYDVFGTPRPDEYYTQARQELPIVNNRFEAKKQVEQLIQK.

A helical membrane pass occupies residues 21–35 (VIHSITIPALFIAGW). A heme-binding site is contributed by H23.

Belongs to the PsbE/PsbF family. In terms of assembly, heterodimer of an alpha subunit and a beta subunit. PSII is composed of 1 copy each of membrane proteins PsbA, PsbB, PsbC, PsbD, PsbE, PsbF, PsbH, PsbI, PsbJ, PsbK, PsbL, PsbM, PsbT, PsbX, PsbY, PsbZ, Psb30/Ycf12, peripheral proteins PsbO, CyanoQ (PsbQ), PsbU, PsbV and a large number of cofactors. It forms dimeric complexes. Heme b serves as cofactor.

It is found in the cellular thylakoid membrane. Its function is as follows. This b-type cytochrome is tightly associated with the reaction center of photosystem II (PSII). PSII is a light-driven water:plastoquinone oxidoreductase that uses light energy to abstract electrons from H(2)O, generating O(2) and a proton gradient subsequently used for ATP formation. It consists of a core antenna complex that captures photons, and an electron transfer chain that converts photonic excitation into a charge separation. The protein is Cytochrome b559 subunit alpha of Nostoc sp. (strain PCC 7120 / SAG 25.82 / UTEX 2576).